A 266-amino-acid chain; its full sequence is Undecaprenyl-diphosphatase (266 aa).

Transmembrane regions (helical) follow at residues 1-21, 39-59, 87-107, 111-131, 143-163, 186-206, 217-237, and 243-263; these read MTWLEIVVLALIQGLTEFLPI, QGLAFDVAVHVGTLLAVMVYF, WAVILGTIPACVAGLLLDSWI, LRSALVIALTTIGFGVLLGMA, FTLKDALIIGVSQALALIPGT, FSFLLSIPLIAAAGLFKGLEL, EIAGATLISAVSAYACIHLFL, and IGFMPFVIYRMLLGAGLLVWL.

This sequence belongs to the UppP family.

The protein resides in the cell inner membrane. It catalyses the reaction di-trans,octa-cis-undecaprenyl diphosphate + H2O = di-trans,octa-cis-undecaprenyl phosphate + phosphate + H(+). Its function is as follows. Catalyzes the dephosphorylation of undecaprenyl diphosphate (UPP). Confers resistance to bacitracin. The chain is Undecaprenyl-diphosphatase from Hahella chejuensis (strain KCTC 2396).